Here is a 342-residue protein sequence, read N- to C-terminus: Paired box protein Pax-9 (342 aa).

The segment at residues 4–130 (AFGEVNQLGG…SSISRILRNK (127 aa)) is a DNA-binding region (paired). The segment at 7–63 (EVNQLGGVFVNGRPLPNAIRLRIVELAQLGIRPCDISRQLRVSHGCVSKILARYNET) is PAI subdomain. The tract at residues 82-130 (TVVKHIRTYKQRDPGIFAWEIRDRLLADGVCDKYNVPSVSSISRILRNK) is RED subdomain. An interaction with KDM5B region spans residues 168–189 (AAAAKVPTPPGVPAIPGSVALP).

Interacts with KDM5B.

The protein resides in the nucleus. Transcription factor required for normal development of thymus, parathyroid glands, ultimobranchial bodies, teeth, skeletal elements of skull and larynx as well as distal limbs. This is Paired box protein Pax-9 from Rattus norvegicus (Rat).